Here is an 888-residue protein sequence, read N- to C-terminus: ETO1-like protein 1 (888 aa).

Positions 180 to 280 (KNVVFKIGEE…ACDRELASLI (101 aa)) constitute a BTB domain. TPR repeat units lie at residues 381 to 414 (VLGF…GHVY), 441 to 477 (SSVS…DPTL), 511 to 544 (LECL…CPDY), 637 to 670 (HERL…KRSF), and 711 to 744 (GQAL…RHTR). The stretch at 755–793 (LRNDKAAAYEEMTRLIEKAQNNASAYEKRSEYCDRELAK) forms a coiled coil. 2 TPR repeats span residues 807-840 (VYPY…KADL) and 842-873 (LLHL…DPNH).

Belongs to the ETO1 family. In terms of assembly, interacts with the C-terminal domain of ACS4, ACS5 and ACS9. In terms of tissue distribution, predominantly expressed in flowers.

Its pathway is protein modification; protein ubiquitination. Its function is as follows. Possible regulator of the ethylene pathway, which acts by regulating the stability of 1-aminocyclopropane-1-carboxylate synthase (ACS) enzymes. May act as a substrate-specific adapter that connects ACS enzymes, such as ACS5, to ubiquitin ligase complexes, leading to proteasomal degradation of ACS enzymes. This is ETO1-like protein 1 (EOL1) from Arabidopsis thaliana (Mouse-ear cress).